We begin with the raw amino-acid sequence, 101 residues long: Urease subunit gamma (101 aa).

Belongs to the urease gamma subunit family. As to quaternary structure, heterotrimer of UreA (gamma), UreB (beta) and UreC (alpha) subunits. Three heterotrimers associate to form the active enzyme.

The protein resides in the cytoplasm. The enzyme catalyses urea + 2 H2O + H(+) = hydrogencarbonate + 2 NH4(+). Its pathway is nitrogen metabolism; urea degradation; CO(2) and NH(3) from urea (urease route): step 1/1. In Geobacillus kaustophilus (strain HTA426), this protein is Urease subunit gamma.